Consider the following 64-residue polypeptide: DNA gyrase inhibitor YacG (64 aa).

Zn(2+) is bound by residues Cys9, Cys12, Cys28, and Cys32. A disordered region spans residues 45 to 64 (KRIPSAGDLSDSDDWSEQQP). A compositionally biased stretch (acidic residues) spans 54–64 (SDSDDWSEQQP).

The protein belongs to the DNA gyrase inhibitor YacG family. As to quaternary structure, interacts with GyrB. Zn(2+) is required as a cofactor.

Functionally, inhibits all the catalytic activities of DNA gyrase by preventing its interaction with DNA. Acts by binding directly to the C-terminal domain of GyrB, which probably disrupts DNA binding by the gyrase. The protein is DNA gyrase inhibitor YacG of Klebsiella pneumoniae (strain 342).